The chain runs to 560 residues: Glucose-6-phosphate isomerase, cytosolic (560 aa).

The residue at position 2 (alanine 2) is an N-acetylalanine. Residue glutamate 361 is the Proton donor of the active site. Residues histidine 392 and lysine 517 contribute to the active site.

It belongs to the GPI family. In terms of assembly, homodimer.

It is found in the cytoplasm. It carries out the reaction alpha-D-glucose 6-phosphate = beta-D-fructose 6-phosphate. Its pathway is carbohydrate degradation; glycolysis; D-glyceraldehyde 3-phosphate and glycerone phosphate from D-glucose: step 2/4. The polypeptide is Glucose-6-phosphate isomerase, cytosolic (PGIC) (Arabidopsis lyrata subsp. petraea (Northern rock-cress)).